Consider the following 180-residue polypeptide: Ribulose bisphosphate carboxylase small subunit, chloroplastic 2 (180 aa).

A chloroplast-targeting transit peptide spans 1 to 56; sequence MASSVMSSAAVATSTNAAQASMVAPFTGLKSAASFPVSRKQNLDITSIASNGGRVQ.

Belongs to the RuBisCO small chain family. Heterohexadecamer of 8 large and 8 small subunits.

It localises to the plastid. Its subcellular location is the chloroplast. In terms of biological role, ruBisCO catalyzes two reactions: the carboxylation of D-ribulose 1,5-bisphosphate, the primary event in carbon dioxide fixation, as well as the oxidative fragmentation of the pentose substrate. Both reactions occur simultaneously and in competition at the same active site. Although the small subunit is not catalytic it is essential for maximal activity. The polypeptide is Ribulose bisphosphate carboxylase small subunit, chloroplastic 2 (Petunia hybrida (Petunia)).